Here is a 437-residue protein sequence, read N- to C-terminus: GTPase Der (437 aa).

2 EngA-type G domains span residues 4 to 168 (PVVA…PAED) and 177 to 352 (IRVS…QAHS). GTP contacts are provided by residues 10-17 (GRPNVGKS), 57-61 (DTGGI), 120-123 (NKAD), 183-190 (GRPNVGKS), 230-234 (DTAGM), and 295-298 (NKWD). A KH-like domain is found at 353–437 (MRIPTAVLND…PVRIWTRKKT (85 aa)).

Belongs to the TRAFAC class TrmE-Era-EngA-EngB-Septin-like GTPase superfamily. EngA (Der) GTPase family. Associates with the 50S ribosomal subunit.

Its function is as follows. GTPase that plays an essential role in the late steps of ribosome biogenesis. The polypeptide is GTPase Der (Brevibacillus brevis (strain 47 / JCM 6285 / NBRC 100599)).